The chain runs to 170 residues: Nucleoside-triphosphatase THEP1 (170 aa).

ATP is bound by residues 7–14 and 98–105; these read GMPGVGKT and IIIIDELG.

It belongs to the THEP1 NTPase family.

It catalyses the reaction a ribonucleoside 5'-triphosphate + H2O = a ribonucleoside 5'-diphosphate + phosphate + H(+). Its function is as follows. Has nucleotide phosphatase activity towards ATP, GTP, CTP, TTP and UTP. May hydrolyze nucleoside diphosphates with lower efficiency. This Methanocaldococcus jannaschii (strain ATCC 43067 / DSM 2661 / JAL-1 / JCM 10045 / NBRC 100440) (Methanococcus jannaschii) protein is Nucleoside-triphosphatase THEP1.